Consider the following 339-residue polypeptide: DNA-directed RNA polymerase subunit alpha (339 aa).

The tract at residues 1–233 (MVREEVAGST…DLFLPFLHAE (233 aa)) is alpha N-terminal domain (alpha-NTD). An alpha C-terminal domain (alpha-CTD) region spans residues 264-339 (KKGIPLNCIF…IDLLKNKLSF (76 aa)).

This sequence belongs to the RNA polymerase alpha chain family. In plastids the minimal PEP RNA polymerase catalytic core is composed of four subunits: alpha, beta, beta', and beta''. When a (nuclear-encoded) sigma factor is associated with the core the holoenzyme is formed, which can initiate transcription.

It localises to the plastid. The protein localises to the chloroplast. It carries out the reaction RNA(n) + a ribonucleoside 5'-triphosphate = RNA(n+1) + diphosphate. Its function is as follows. DNA-dependent RNA polymerase catalyzes the transcription of DNA into RNA using the four ribonucleoside triphosphates as substrates. This Psathyrostachys fragilis (Russian wild rye) protein is DNA-directed RNA polymerase subunit alpha.